A 360-amino-acid polypeptide reads, in one-letter code: MFLWLAHFSNWLTGLNIFQYTTFRAVMAALTALAFSLMFGPWTIRRLTALKCGQAVRTDGPQTHLVKNGTPTMGGSLILTAITVSTLLWGNWANPYIWILLGVLLATGALGFYDDWRKVVYKDPNGVSAKFKMVWQSSVAIIASLALFYLAANSANNILIVPFFKQIALPLGVVGFLVLSYLTIVGTSNAVNLTDGLDGLATFPVVLVAAGLAIFAYASGHSQFAQYLQLPYVAGANEVVIFCTAMCGACLGFLWFNAYPAQVFMGDVGALALGAALGTVAVIVRQEFVLVIMGGLFVVEAVSVMLQVGWYKKTKKRIFLMAPIHHHYEQKGWKETQVVVRFWIITIVLVLIGLSTLKIR.

10 helical membrane-spanning segments follow: residues 24–44 (RAVM…PWTI), 69–89 (GTPT…TLLW), 92–112 (WANP…ALGF), 133–153 (MVWQ…LAAN), 158–178 (ILIV…GFLV), 199–219 (GLAT…AYAS), 239–259 (VVIF…FNAY), 263–283 (VFMG…VAVI), 288–308 (FVLV…MLQV), and 337–357 (QVVV…LSTL).

Belongs to the glycosyltransferase 4 family. MraY subfamily. The cofactor is Mg(2+).

Its subcellular location is the cell inner membrane. It carries out the reaction UDP-N-acetyl-alpha-D-muramoyl-L-alanyl-gamma-D-glutamyl-meso-2,6-diaminopimeloyl-D-alanyl-D-alanine + di-trans,octa-cis-undecaprenyl phosphate = di-trans,octa-cis-undecaprenyl diphospho-N-acetyl-alpha-D-muramoyl-L-alanyl-D-glutamyl-meso-2,6-diaminopimeloyl-D-alanyl-D-alanine + UMP. It participates in cell wall biogenesis; peptidoglycan biosynthesis. In terms of biological role, catalyzes the initial step of the lipid cycle reactions in the biosynthesis of the cell wall peptidoglycan: transfers peptidoglycan precursor phospho-MurNAc-pentapeptide from UDP-MurNAc-pentapeptide onto the lipid carrier undecaprenyl phosphate, yielding undecaprenyl-pyrophosphoryl-MurNAc-pentapeptide, known as lipid I. This chain is Phospho-N-acetylmuramoyl-pentapeptide-transferase, found in Neisseria meningitidis serogroup C / serotype 2a (strain ATCC 700532 / DSM 15464 / FAM18).